The primary structure comprises 459 residues: Argininosuccinate lyase (459 aa).

Belongs to the lyase 1 family. Argininosuccinate lyase subfamily.

The protein resides in the cytoplasm. The enzyme catalyses 2-(N(omega)-L-arginino)succinate = fumarate + L-arginine. The protein operates within amino-acid biosynthesis; L-arginine biosynthesis; L-arginine from L-ornithine and carbamoyl phosphate: step 3/3. The sequence is that of Argininosuccinate lyase from Staphylococcus aureus (strain MSSA476).